An 872-amino-acid chain; its full sequence is F-box protein pof6 (872 aa).

The 46-residue stretch at 30-75 (FGCLTINIYLKIFTLISTPDLCNCRLVCRKFQQLCDYNSIYVKKLL) folds into the F-box domain. Positions 101-122 (MSSNTSKGFHLQSSDKKYADSD) are disordered. Basic and acidic residues predominate over residues 113–122 (SSDKKYADSD).

In terms of assembly, interacts with skp1. Forms a complex with pof6 and skp1.

It is found in the cytoplasm. It localises to the nucleus. Its function is as follows. Together with skp1, essential for septum processing and cell separation. The chain is F-box protein pof6 (pof6) from Schizosaccharomyces pombe (strain 972 / ATCC 24843) (Fission yeast).